The sequence spans 1135 residues: Retinoblastoma-like protein 2 (1135 aa).

The tract at residues Met-1 to Gln-43 is disordered. The residue at position 410 (Ser-410) is a Phosphoserine. Thr-414 is subject to Phosphothreonine. The interval Thr-414 to Val-613 is domain A. A pocket; binds E1A region spans residues Thr-414–Ala-1021. Ser-417 carries O-linked (GlcNAc) serine glycosylation. Residues Pro-614 to Ile-824 form a spacer region. At Ser-636 the chain carries Phosphoserine. Thr-639 carries the post-translational modification Phosphothreonine. 3 disordered regions span residues Asp-649–Pro-698, Ile-806–Arg-825, and Arg-932–Glu-995. Over residues Ser-656 to Thr-674 the composition is skewed to polar residues. 3 positions are modified to phosphoserine: Ser-659, Ser-669, and Ser-684. Over residues Ile-806–Pro-818 the composition is skewed to low complexity. Residues Arg-825 to Ala-1021 form a domain B region. 2 stretches are compositionally biased toward polar residues: residues Ser-935 to Leu-950 and Asp-958 to Leu-969. Phosphoserine occurs at positions 942, 946, 960, 965, and 967. A Phosphothreonine modification is found at Thr-968. Residues Val-971–Pro-981 are compositionally biased toward pro residues. Ser-975 and Ser-976 each carry phosphoserine. A Phosphothreonine modification is found at Thr-980. Ser-1031, Ser-1064, Ser-1076, and Ser-1108 each carry phosphoserine.

Belongs to the retinoblastoma protein (RB) family. Interacts with AATF, KMT5B and KMT5C. Component of the DREAM complex (also named LINC complex) at least composed of E2F4, E2F5, LIN9, LIN37, LIN52, LIN54, MYBL1, MYBL2, RBL1, RBL2, RBBP4, TFDP1 and TFDP2. The complex exists in quiescent cells where it represses cell cycle-dependent genes. It dissociates in S phase when LIN9, LIN37, LIN52 and LIN54 form a subcomplex that binds to MYBL2. Interacts with USP4. Part of the peroxisome proliferator activated receptor alpha (PPAR-alpha) interacting complex (PRIC). Interacts with RINT1. Interacts with PML. Interacts with RBBP9. Interacts with CD53. In terms of processing, during G0 and early G1 phase of the cell cycle, phosphorylated on Ser-636 and on 5 sites within the domain B. Phosphorylation on Ser-669 in G1 leads to its ubiquitin-dependent proteolysis.

Its subcellular location is the nucleus. Key regulator of entry into cell division. Directly involved in heterochromatin formation by maintaining overall chromatin structure and, in particular, that of constitutive heterochromatin by stabilizing histone methylation. Recruits and targets histone methyltransferases KMT5B and KMT5C, leading to epigenetic transcriptional repression. Controls histone H4 'Lys-20' trimethylation. Probably acts as a transcription repressor by recruiting chromatin-modifying enzymes to promoters. Potent inhibitor of E2F-mediated trans-activation, associates preferentially with E2F5. Binds to cyclins A and E. Binds to and may be involved in the transforming capacity of the adenovirus E1A protein. May act as a tumor suppressor. This is Retinoblastoma-like protein 2 (Rbl2) from Rattus norvegicus (Rat).